A 156-amino-acid chain; its full sequence is 6,7-dimethyl-8-ribityllumazine synthase (156 aa).

5-amino-6-(D-ribitylamino)uracil-binding positions include F25, 59-61 (AFE), and 83-85 (AVI). Position 88–89 (88–89 (AT)) interacts with (2S)-2-hydroxy-3-oxobutyl phosphate. H91 functions as the Proton donor in the catalytic mechanism. F116 contributes to the 5-amino-6-(D-ribitylamino)uracil binding site. R130 provides a ligand contact to (2S)-2-hydroxy-3-oxobutyl phosphate.

The protein belongs to the DMRL synthase family.

The catalysed reaction is (2S)-2-hydroxy-3-oxobutyl phosphate + 5-amino-6-(D-ribitylamino)uracil = 6,7-dimethyl-8-(1-D-ribityl)lumazine + phosphate + 2 H2O + H(+). It functions in the pathway cofactor biosynthesis; riboflavin biosynthesis; riboflavin from 2-hydroxy-3-oxobutyl phosphate and 5-amino-6-(D-ribitylamino)uracil: step 1/2. In terms of biological role, catalyzes the formation of 6,7-dimethyl-8-ribityllumazine by condensation of 5-amino-6-(D-ribitylamino)uracil with 3,4-dihydroxy-2-butanone 4-phosphate. This is the penultimate step in the biosynthesis of riboflavin. This Nitratidesulfovibrio vulgaris (strain DSM 19637 / Miyazaki F) (Desulfovibrio vulgaris) protein is 6,7-dimethyl-8-ribityllumazine synthase.